We begin with the raw amino-acid sequence, 357 residues long: Inositol-tetrakisphosphate 1-kinase 3 (357 aa).

1D-myo-inositol 1,3,4-trisphosphate is bound by residues lysine 56 and lysine 98. The ATP site is built by arginine 133 and lysine 183. 1D-myo-inositol 1,3,4-trisphosphate is bound by residues histidine 190 and lysine 222. ATP is bound by residues 211–222 (QEFVNHGGVLFK), serine 237, and serine 262. 3 residues coordinate Mg(2+): aspartate 302, aspartate 317, and asparagine 319. Residue asparagine 319 participates in 1D-myo-inositol 1,3,4-trisphosphate binding.

It belongs to the ITPK1 family. As to quaternary structure, monomer. Mg(2+) serves as cofactor. Expressed in roots, leaves, flowers, anthers and embryos.

It carries out the reaction 1D-myo-inositol 3,4,5,6-tetrakisphosphate + ATP = 1D-myo-inositol 1,3,4,5,6-pentakisphosphate + ADP + H(+). It catalyses the reaction 1D-myo-inositol 1,3,4-trisphosphate + ATP = 1D-myo-inositol 1,3,4,5-tetrakisphosphate + ADP + H(+). The enzyme catalyses 1D-myo-inositol 1,3,4-trisphosphate + ATP = 1D-myo-inositol 1,3,4,6-tetrakisphosphate + ADP + H(+). Kinase that can phosphorylate various inositol polyphosphate such as Ins(3,4,5,6)P4 or Ins(1,3,4)P3 and participates in phytic acid biosynthesis in developing seeds. Phytic acid is the primary storage form of phosphorus in cereal grains and other plant seeds. The sequence is that of Inositol-tetrakisphosphate 1-kinase 3 from Oryza sativa subsp. japonica (Rice).